Here is a 183-residue protein sequence, read N- to C-terminus: MTATAQQLEYLKNSIKSIQDYPKPGILFRDVTSLLEDPKAYALSIDLLVERYKNAGITKVVGTEARGFLFGAPVALGLGVGFVPVRKPGKLPRETISETYDLEYGTDQLEIHVDAIKPGDKVLVVDDLLATGGTIEATVKLIRRLGGEVTDAAFIINLFDLGGEQRLEKQGITSYSLVPFPGH.

This sequence belongs to the purine/pyrimidine phosphoribosyltransferase family. As to quaternary structure, homodimer.

Its subcellular location is the cytoplasm. It carries out the reaction AMP + diphosphate = 5-phospho-alpha-D-ribose 1-diphosphate + adenine. It functions in the pathway purine metabolism; AMP biosynthesis via salvage pathway; AMP from adenine: step 1/1. Its function is as follows. Catalyzes a salvage reaction resulting in the formation of AMP, that is energically less costly than de novo synthesis. This Escherichia fergusonii (strain ATCC 35469 / DSM 13698 / CCUG 18766 / IAM 14443 / JCM 21226 / LMG 7866 / NBRC 102419 / NCTC 12128 / CDC 0568-73) protein is Adenine phosphoribosyltransferase.